Reading from the N-terminus, the 549-residue chain is Exodeoxyribonuclease 7 large subunit (549 aa).

The disordered stretch occupies residues 511 to 549 (LVATDPPVDPKPTRKPVQKSSSPKPSSRKPKKSQQEDLF).

It belongs to the XseA family. Heterooligomer composed of large and small subunits.

It is found in the cytoplasm. The catalysed reaction is Exonucleolytic cleavage in either 5'- to 3'- or 3'- to 5'-direction to yield nucleoside 5'-phosphates.. Bidirectionally degrades single-stranded DNA into large acid-insoluble oligonucleotides, which are then degraded further into small acid-soluble oligonucleotides. The sequence is that of Exodeoxyribonuclease 7 large subunit from Beijerinckia indica subsp. indica (strain ATCC 9039 / DSM 1715 / NCIMB 8712).